Consider the following 953-residue polypeptide: Zinc finger CCCH domain-containing protein 18 (953 aa).

M1 carries the post-translational modification N-acetylmethionine. Positions 1 to 14 (MDVAESPERDPHSP) are enriched in basic and acidic residues. Disordered regions lie at residues 1–222 (MDVA…RPRP) and 391–928 (QYTE…LSRR). The residue at position 6 (S6) is a Phosphoserine. A compositionally biased stretch (acidic residues) spans 15–26 (EDEEQPQGLSDD). 9 positions are modified to phosphoserine: S34, S46, S53, S59, S67, S74, S78, S83, and S95. The segment covering 60–72 (QEEEDNHSDEEDR) has biased composition (acidic residues). The segment covering 97-106 (CEEEGDEGEE) has biased composition (acidic residues). A coiled-coil region spans residues 105 to 134 (EEDRTSDLRDEASSVTRELDEHELDYDEEV). A compositionally biased stretch (basic and acidic residues) spans 107–124 (DRTSDLRDEASSVTRELD). A Phosphothreonine modification is found at T109. A phosphoserine mark is found at S110 and S118. 2 stretches are compositionally biased toward acidic residues: residues 125 to 136 (EHELDYDEEVPE) and 143 to 158 (QEDE…DEEK). A compositionally biased stretch (basic and acidic residues) spans 159 to 168 (GEGTPREEGK). T162 carries the post-translational modification Phosphothreonine. Residues S173 and S179 each carry the phosphoserine modification. Residues 175–190 (GEKESLEAAKEKKKED) are compositionally biased toward basic and acidic residues. Positions 191–207 (DDGEIDDGEIDDDDLEE) are enriched in acidic residues. The segment covering 208–217 (GEVKDPSDRK) has biased composition (basic and acidic residues). The segment at 219-245 (RPRPTCRFFMKGNCTWGMNCRFIHPGV) adopts a C3H1-type zinc-finger fold. A compositionally biased stretch (basic and acidic residues) spans 396–482 (EPYHNYRERE…EKEREKEKGK (87 aa)). A coiled-coil region spans residues 399–464 (HNYRERERER…RERAKRDEKD (66 aa)). A Phosphoserine modification is found at S487. A Glycyl lysine isopeptide (Lys-Gly) (interchain with G-Cter in SUMO2) cross-link involves residue K510. The span at 510-520 (KRADEWKDPWR) shows a compositional bias: basic and acidic residues. A phosphoserine mark is found at S532, S534, and S536. The span at 545 to 606 (SASSASASNS…SRSRSFSSSP (62 aa)) shows a compositional bias: low complexity. Glycyl lysine isopeptide (Lys-Gly) (interchain with G-Cter in SUMO2) cross-links involve residues K622 and K661. Basic and acidic residues predominate over residues 661-670 (KPGDPREARR). Low complexity-rich tracts occupy residues 692 to 725 (GSSY…SAHS) and 736 to 750 (ASPV…PAPA). A compositionally biased stretch (basic and acidic residues) spans 760–774 (KKEDGVKEEKRKRDS). Residue K766 forms a Glycyl lysine isopeptide (Lys-Gly) (interchain with G-Cter in SUMO2) linkage. Residues 778-798 (PPKSAKPPAGGKSSQQPSTPQ) show a composition bias toward low complexity. The residue at position 814 (K814) is an N6-acetyllysine. K817 participates in a covalent cross-link: Glycyl lysine isopeptide (Lys-Gly) (interchain with G-Cter in SUMO2). Positions 824 to 841 (AADKGSRKRYEPSDKDRQ) are enriched in basic and acidic residues. 5 positions are modified to phosphoserine: S842, S852, S868, S893, and S896. Positions 893–906 (SPQSKSSSKVTSVP) are enriched in low complexity. A Glycyl lysine isopeptide (Lys-Gly) (interchain with G-Cter in SUMO2) cross-link involves residue K908. Residues 916–925 (STKSGKASTL) are compositionally biased toward polar residues. Residues 921 to 950 (KASTLSRREELLKQLKAVEDAIARKRAKIP) are a coiled coil.

In terms of assembly, interacts with ZFC3H1 in a RNase-insensitive manner.

The protein resides in the nucleus. In Homo sapiens (Human), this protein is Zinc finger CCCH domain-containing protein 18.